The chain runs to 266 residues: Small ribosomal subunit protein uS2 (266 aa).

This sequence belongs to the universal ribosomal protein uS2 family.

In Bartonella tribocorum (strain CIP 105476 / IBS 506), this protein is Small ribosomal subunit protein uS2.